A 332-amino-acid chain; its full sequence is L-lactate dehydrogenase C chain (332 aa).

Ser2 is subject to Blocked amino end (Ser). NAD(+) is bound by residues 29–57 and Arg99; that span reads GNVG…DTNK. Substrate-binding residues include Arg106, Asn138, and Arg169. An NAD(+)-binding site is contributed by Asn138. The Proton acceptor role is filled by His193. Thr248 contributes to the substrate binding site.

This sequence belongs to the LDH/MDH superfamily. LDH family. As to quaternary structure, homotetramer. Interacts with RABL2/RABL2A; binds preferentially to GTP-bound RABL2. Expressed within the midpiece of sperm tail (at protein level).

Its subcellular location is the cytoplasm. The catalysed reaction is (S)-lactate + NAD(+) = pyruvate + NADH + H(+). Its pathway is fermentation; pyruvate fermentation to lactate; (S)-lactate from pyruvate: step 1/1. In terms of biological role, possible role in sperm motility. This Mus musculus (Mouse) protein is L-lactate dehydrogenase C chain (Ldhc).